We begin with the raw amino-acid sequence, 325 residues long: Zinc finger C2HC domain-containing protein 1A (325 aa).

The C2HC/C3H-type 1 zinc finger occupies 15 to 44; that stretch reads ELLPCKICGRTFFPVALKKHGPICQKTATK. Zn(2+) contacts are provided by Cys-19, Cys-22, His-34, and Cys-38. Positions 43-83 are disordered; the sequence is TKKRKTFDSSRQRAEGTDIPTVKPLKPRPEPPKKPSNWRRK. Positions 48–58 are enriched in basic and acidic residues; the sequence is TFDSSRQRAEG. Residues 118 to 147 form a C2HC/C3H-type 2 zinc finger; it reads DYIQCPYCQRRFNENAADRHINFCKEQAAR. Zn(2+) contacts are provided by Cys-122, Cys-125, His-137, and Cys-141. The disordered stretch occupies residues 150–260; it reads NKGKFSTDTK…NPAPGVLTNK (111 aa). Low complexity-rich tracts occupy residues 177 to 188 and 197 to 216; these read SNSPGTASSGSS and GKTV…SSLG. Ser-223 is modified (phosphoserine). Thr-244 is subject to Phosphothreonine. Ser-292 carries the post-translational modification Phosphoserine.

The protein belongs to the ZC2HC1 family. It depends on Zn(2+) as a cofactor.

The chain is Zinc finger C2HC domain-containing protein 1A (ZC2HC1A) from Homo sapiens (Human).